A 361-amino-acid polypeptide reads, in one-letter code: Queuine tRNA-ribosyltransferase (361 aa).

Asp89 functions as the Proton acceptor in the catalytic mechanism. Substrate contacts are provided by residues 89-93 (DSGGF), Asp143, Gln185, and Gly212. Positions 243–249 (GVGTPED) are RNA binding. Asp262 functions as the Nucleophile in the catalytic mechanism. Positions 267 to 271 (TRNAR) are RNA binding; important for wobble base 34 recognition. Residues Cys300, Cys302, Cys305, and His331 each coordinate Zn(2+).

It belongs to the queuine tRNA-ribosyltransferase family. Homodimer. Within each dimer, one monomer is responsible for RNA recognition and catalysis, while the other monomer binds to the replacement base PreQ1. Zn(2+) serves as cofactor.

The catalysed reaction is 7-aminomethyl-7-carbaguanine + guanosine(34) in tRNA = 7-aminomethyl-7-carbaguanosine(34) in tRNA + guanine. Its pathway is tRNA modification; tRNA-queuosine biosynthesis. In terms of biological role, catalyzes the base-exchange of a guanine (G) residue with the queuine precursor 7-aminomethyl-7-deazaguanine (PreQ1) at position 34 (anticodon wobble position) in tRNAs with GU(N) anticodons (tRNA-Asp, -Asn, -His and -Tyr). Catalysis occurs through a double-displacement mechanism. The nucleophile active site attacks the C1' of nucleotide 34 to detach the guanine base from the RNA, forming a covalent enzyme-RNA intermediate. The proton acceptor active site deprotonates the incoming PreQ1, allowing a nucleophilic attack on the C1' of the ribose to form the product. After dissociation, two additional enzymatic reactions on the tRNA convert PreQ1 to queuine (Q), resulting in the hypermodified nucleoside queuosine (7-(((4,5-cis-dihydroxy-2-cyclopenten-1-yl)amino)methyl)-7-deazaguanosine). The chain is Queuine tRNA-ribosyltransferase from Nitrosomonas eutropha (strain DSM 101675 / C91 / Nm57).